The chain runs to 364 residues: Chorismate synthase (364 aa).

Residue arginine 48 participates in NADP(+) binding. Residues 131-133 (RAS), 243-244 (NA), glycine 288, 303-307 (KPTSS), and arginine 329 contribute to the FMN site.

The protein belongs to the chorismate synthase family. As to quaternary structure, homotetramer. FMNH2 is required as a cofactor.

It carries out the reaction 5-O-(1-carboxyvinyl)-3-phosphoshikimate = chorismate + phosphate. The protein operates within metabolic intermediate biosynthesis; chorismate biosynthesis; chorismate from D-erythrose 4-phosphate and phosphoenolpyruvate: step 7/7. Functionally, catalyzes the anti-1,4-elimination of the C-3 phosphate and the C-6 proR hydrogen from 5-enolpyruvylshikimate-3-phosphate (EPSP) to yield chorismate, which is the branch point compound that serves as the starting substrate for the three terminal pathways of aromatic amino acid biosynthesis. This reaction introduces a second double bond into the aromatic ring system. The sequence is that of Chorismate synthase from Bartonella bacilliformis (strain ATCC 35685 / KC583 / Herrer 020/F12,63).